The sequence spans 917 residues: Hexokinase-2 (917 aa).

M1 is subject to N-acetylmethionine. The segment at 1–16 (MIASHLLAYFFTELNH) is mitochondrial-binding peptide (MBP). 2 Hexokinase domains span residues 16 to 458 (HDQV…MVTA) and 464 to 906 (AYQH…LITA). ATP contacts are provided by residues R30 and 84–89 (DLGGTN). The segment at 73-207 (DGTEHGEFLA…DFDIDIVAMV (135 aa)) is hexokinase small subdomain 1. 84-88 (DLGGT) contributes to the D-glucose 6-phosphate binding site. D-glucose contacts are provided by residues 155-156 (SF), 172-173 (TK), 208-209 (ND), N235, E260, and 291-294 (QLFE). Residues 208-447 (NDTVATMMTC…CDIRFLCSED (240 aa)) form a hexokinase large subdomain 1 region. Residue D209 participates in D-glucose 6-phosphate binding. 413-415 (DGS) contributes to the D-glucose 6-phosphate binding site. 425–426 (KR) is an ATP binding site. Residues S449 and 532–536 (DLGGT) contribute to the D-glucose 6-phosphate site. The hexokinase small subdomain 2 stretch occupies residues 521–655 (DGTEKGDFLA…EFDLDVVAVV (135 aa)). 532–537 (DLGGTN) contacts ATP. D-glucose-binding positions include 603-604 (SF), 620-621 (TK), and 656-657 (ND). The interval 656–895 (NDTVGTMMTC…CDVSFLESED (240 aa)) is hexokinase large subdomain 2. D-glucose 6-phosphate is bound by residues D657 and T680. T680 provides a ligand contact to ATP. Residues 682-683 (SN), E708, and 739-742 (QRFE) each bind D-glucose. Residues 747–748 (GM), 784–788 (TKFLS), and 863–867 (TLYKL) each bind ATP. Residues 861–863 (DGT) and S897 each bind D-glucose 6-phosphate.

Belongs to the hexokinase family. Monomer. Interacts with TIGAR; the interaction increases hexokinase activity in a hypoxia- and HIF1A-dependent manner.

The protein resides in the mitochondrion outer membrane. It is found in the cytoplasm. Its subcellular location is the cytosol. The catalysed reaction is a D-hexose + ATP = a D-hexose 6-phosphate + ADP + H(+). It catalyses the reaction D-fructose + ATP = D-fructose 6-phosphate + ADP + H(+). The enzyme catalyses D-glucose + ATP = D-glucose 6-phosphate + ADP + H(+). The protein operates within carbohydrate metabolism; hexose metabolism. It participates in carbohydrate degradation; glycolysis; D-glyceraldehyde 3-phosphate and glycerone phosphate from D-glucose: step 1/4. Its activity is regulated as follows. Hexokinase activity is specifically inhibited by 2,6-disubstituted glucosamines. In terms of biological role, catalyzes the phosphorylation of hexose, such as D-glucose and D-fructose, to hexose 6-phosphate (D-glucose 6-phosphate and D-fructose 6-phosphate, respectively). Mediates the initial step of glycolysis by catalyzing phosphorylation of D-glucose to D-glucose 6-phosphate. Plays a key role in maintaining the integrity of the outer mitochondrial membrane by preventing the release of apoptogenic molecules from the intermembrane space and subsequent apoptosis. The chain is Hexokinase-2 from Equus zebra (Mountain zebra).